A 233-amino-acid polypeptide reads, in one-letter code: Ribulose-phosphate 3-epimerase (233 aa).

Ser-16 is a substrate binding site. A divalent metal cation-binding residues include His-41, Asp-43, and His-74. The active-site Proton acceptor is Asp-43. Residues His-74, 150-153, 185-187, and 207-208 contribute to the substrate site; these read GFCG, DGG, and AS. Asp-185 contacts a divalent metal cation. The Proton donor role is filled by Asp-185.

The protein belongs to the ribulose-phosphate 3-epimerase family. A divalent metal cation is required as a cofactor.

The enzyme catalyses D-ribulose 5-phosphate = D-xylulose 5-phosphate. It participates in carbohydrate degradation. Its function is as follows. Catalyzes the reversible epimerization of D-ribulose 5-phosphate to D-xylulose 5-phosphate. The polypeptide is Ribulose-phosphate 3-epimerase (Chlamydia trachomatis serovar D (strain ATCC VR-885 / DSM 19411 / UW-3/Cx)).